The following is a 235-amino-acid chain: Protein YIP4 (235 aa).

5 helical membrane passes run I89–V109, S114–L134, L145–V165, V186–V206, and I215–L235.

Belongs to the YIP1 family. Interacts with TVP18, TVP23, YIP1 and YIP5. Interacts with SEC4, YPT1, YPT6, YPT7, YPT10, YPT11, YPT31, YPT32 and YPT52; These proteins are all Rab GTPases.

It is found in the golgi apparatus membrane. May be involved in proper membrane localization of Rab GTPases. This chain is Protein YIP4 (YIP4), found in Saccharomyces cerevisiae (strain ATCC 204508 / S288c) (Baker's yeast).